Here is a 258-residue protein sequence, read N- to C-terminus: F-box/SPRY domain-containing protein 1 (258 aa).

In terms of domain architecture, F-box spans 6–54 (TEYAPDIPDNVLELIFSYLKLQDLRNCALVCKSWHRFLSDENNEVWRAQ). Residues 64–256 (FKTDLLSVVP…ISMVYLGPPL (193 aa)) form the B30.2/SPRY domain.

The protein belongs to the FBXO45/Fsn family. In terms of assembly, component of an E3 ubiquitin ligase complex composed of hiw and Fsn.

Its subcellular location is the synapse. It participates in protein modification; protein ubiquitination. Functionally, required in the presynaptic motoneuron to down-regulate the levels of wnd and restrain synaptic terminal growth at the neuromuscular junction (NMJ). The chain is F-box/SPRY domain-containing protein 1 from Culex quinquefasciatus (Southern house mosquito).